A 352-amino-acid polypeptide reads, in one-letter code: MSDTLPLLLRAARGESVERPPVWMMRQAGRYMKIYRDLRDKYPSFRERSENPDLSYEISMQPFEAFQPDGVILFSDILTPLPGMGIDFDIIESKGPQIGDPIRSMEQVKALRPLNPAESMPFVGEVLGRLRKTVGNQAAVLGFVGAPWTLAAYVVEGKSSKNYAVIKAMAFREPELLHTLLNHFAESIANYLRYQIDSGAQVVQMFDSWAGQLSPADYDTFAAPYQKKVVDLVKQTHPDTPFVLYISGSAGVLERMARTGVDIISLDWTVDMAEACARLPEHIGVQGNVDPGLLFGTPDAIQARIDDTVRKARGRRHILNLGHGILPGTPEENGAAFFRSGKSVMDRIGTLA.

Substrate is bound by residues 26 to 30, aspartate 76, tyrosine 153, serine 208, and histidine 323; that span reads RQAGR.

Belongs to the uroporphyrinogen decarboxylase family. Homodimer.

The protein resides in the cytoplasm. It carries out the reaction uroporphyrinogen III + 4 H(+) = coproporphyrinogen III + 4 CO2. It functions in the pathway porphyrin-containing compound metabolism; protoporphyrin-IX biosynthesis; coproporphyrinogen-III from 5-aminolevulinate: step 4/4. Functionally, catalyzes the decarboxylation of four acetate groups of uroporphyrinogen-III to yield coproporphyrinogen-III. The polypeptide is Uroporphyrinogen decarboxylase (Synechococcus sp. (strain CC9902)).